A 481-amino-acid chain; its full sequence is NADH-quinone oxidoreductase subunit N (481 aa).

14 helical membrane-spanning segments follow: residues 11 to 31 (AYPEIFLLLMVCVVMLADLFA), 37 to 57 (YLAFYLSLLTLAGCALVTCGI), 74 to 94 (AMSDILKLLIYVTVAAVLIYS), 103 to 123 (LLKGEFFSLALFATLGMMVMV), 128 to 148 (LITLYLGLELLSLSLYAMVAL), 162 to 182 (FFVLGALASGFLLYGMSMLYG), 205 to 225 (IFIIGLVFVVAGIGFKLSAVP), 238 to 258 (PTAVTLFIGSAPKFAAFGFVM), 272 to 292 (WQGMLVLLAVASMAVGNIAAI), 300 to 320 (MLAYSTISHMGFVLLGFIAAG), 328 to 348 (MFYVIAYVLMTLGAFGIIMLV), 371 to 391 (LAFMMLLVMFSMAGIPPMIGF), 405 to 425 (GYIWLVVVAVMLSLIGAFYYL), and 457 to 477 (LAIILLGMFPQMLMGLSLSAI).

This sequence belongs to the complex I subunit 2 family. As to quaternary structure, NDH-1 is composed of 14 different subunits. Subunits NuoA, H, J, K, L, M, N constitute the membrane sector of the complex.

The protein localises to the cell inner membrane. It carries out the reaction a quinone + NADH + 5 H(+)(in) = a quinol + NAD(+) + 4 H(+)(out). Functionally, NDH-1 shuttles electrons from NADH, via FMN and iron-sulfur (Fe-S) centers, to quinones in the respiratory chain. The immediate electron acceptor for the enzyme in this species is believed to be ubiquinone. Couples the redox reaction to proton translocation (for every two electrons transferred, four hydrogen ions are translocated across the cytoplasmic membrane), and thus conserves the redox energy in a proton gradient. The sequence is that of NADH-quinone oxidoreductase subunit N from Nitrosomonas europaea (strain ATCC 19718 / CIP 103999 / KCTC 2705 / NBRC 14298).